A 248-amino-acid chain; its full sequence is tRNA pseudouridine synthase A (248 aa).

The Nucleophile role is filled by aspartate 53. Tyrosine 111 lines the substrate pocket.

Belongs to the tRNA pseudouridine synthase TruA family. Homodimer.

The catalysed reaction is uridine(38/39/40) in tRNA = pseudouridine(38/39/40) in tRNA. Functionally, formation of pseudouridine at positions 38, 39 and 40 in the anticodon stem and loop of transfer RNAs. The polypeptide is tRNA pseudouridine synthase A (Listeria innocua serovar 6a (strain ATCC BAA-680 / CLIP 11262)).